A 271-amino-acid chain; its full sequence is Protein ABHD14A (271 aa).

A helical; Signal-anchor for type II membrane protein transmembrane segment spans residues 35-55; that stretch reads VALLGLSLLLMLLLYVGLPGP. Asparagine 67 carries N-linked (GlcNAc...) asparagine glycosylation. The active-site Charge relay system is the serine 171. An N-linked (GlcNAc...) asparagine glycan is attached at asparagine 201. Catalysis depends on charge relay system residues aspartate 222 and histidine 249.

The protein belongs to the AB hydrolase superfamily. ABHD14 family.

The protein localises to the cytoplasm. It is found in the membrane. Possible role in granule neuron development. The protein is Protein ABHD14A of Homo sapiens (Human).